Here is a 256-residue protein sequence, read N- to C-terminus: Small ribosomal subunit protein eS1A (256 aa).

Alanine 2 carries the N-acetylalanine; partial modification.

It belongs to the eukaryotic ribosomal protein eS1 family. As to quaternary structure, component of the small ribosomal subunit. Mature ribosomes consist of a small (40S) and a large (60S) subunit. The 40S subunit contains about 33 different proteins and 1 molecule of RNA (18S). The 60S subunit contains about 49 different proteins and 3 molecules of RNA (25S, 5.8S and 5S).

The protein localises to the cytoplasm. The polypeptide is Small ribosomal subunit protein eS1A (Clavispora lusitaniae (strain ATCC 42720) (Yeast)).